A 45-amino-acid chain; its full sequence is Parabutoporin (45 aa).

In terms of assembly, monomer and homodimer. In terms of tissue distribution, expressed by the venom gland.

The protein localises to the secreted. Its subcellular location is the target cell membrane. At high concentrations, acts as a pore former in cellular membranes and causes the leakage of the cells. At submicromolar concentrations, degranulates granulocytes and has a weak hemolytic activity against human red blood cells. Also strongly inhibits the production of superoxide anions. Has a strong antibacterial activity against Gram-negative bacteria but is less active against Gram-positive bacteria. Also has antifungal activity. Induces reversible G-protein dependent Ca(2+) release from intracellular stores and increase Ca(2+) influx in HL-60 cells. Induces the activation of the Rac pathway in granulocytes. Synergistically enhances the excitatory effects of short and long chain ion-channel-specific neurotoxins by interaction with the neuronal membranes. This chain is Parabutoporin, found in Parabuthus schlechteri (Scorpion).